Here is a 182-residue protein sequence, read N- to C-terminus: ATP-dependent protease subunit HslV (182 aa).

Thr10 is an active-site residue. 3 residues coordinate Na(+): Ala164, Cys167, and Thr170.

Belongs to the peptidase T1B family. HslV subfamily. A double ring-shaped homohexamer of HslV is capped on each side by a ring-shaped HslU homohexamer. The assembly of the HslU/HslV complex is dependent on binding of ATP.

It localises to the cytoplasm. The enzyme catalyses ATP-dependent cleavage of peptide bonds with broad specificity.. Its activity is regulated as follows. Allosterically activated by HslU binding. In terms of biological role, protease subunit of a proteasome-like degradation complex believed to be a general protein degrading machinery. The protein is ATP-dependent protease subunit HslV of Chelativorans sp. (strain BNC1).